A 164-amino-acid chain; its full sequence is DNA-directed RNA polymerase 19 kDa subunit (164 aa).

Residues 1-35 (MADTDDIIDYESDDLTEYEDDDEEEEDGESLETSD) are compositionally biased toward acidic residues. A disordered region spans residues 1–39 (MADTDDIIDYESDDLTEYEDDDEEEEDGESLETSDIDPK).

Belongs to the poxviridae DNA-directed RNA polymerase 19 kDa subunit family. The DNA-dependent RNA polymerase used for intermediate and late genes expression consists of eight subunits Rpo30/OPG66, Rpo7/OPG90, Rpo22/OPG103, Rpo147/OPG105, Rpo18/OPG119, Rpo19/OPG131, Rpo132/OPG151 and Rpo35/OPG156. The same holoenzyme, with the addition of the transcription-specificity factor OPG109, is used for early gene expression.

The protein resides in the virion. It carries out the reaction RNA(n) + a ribonucleoside 5'-triphosphate = RNA(n+1) + diphosphate. Part of the DNA-dependent RNA polymerase which catalyzes the transcription of viral DNA into RNA using the four ribonucleoside triphosphates as substrates. Responsible for the transcription of early, intermediate and late genes. DNA-dependent RNA polymerase associates with the early transcription factor (ETF), itself composed of OPG118 and OPG133, thereby allowing the early genes transcription. Late transcription, and probably also intermediate transcription, require newly synthesized RNA polymerase. This Variola virus (isolate Human/India/Ind3/1967) (VARV) protein is DNA-directed RNA polymerase 19 kDa subunit (OPG131).